An 828-amino-acid chain; its full sequence is ADP-ribosylation factor GTPase-activating protein AGD1 (828 aa).

Positions Met-1–Gln-225 constitute a BAR domain. A coiled-coil region spans residues Gln-225–Ser-255. The interval Gln-247 to Ser-268 is disordered. Positions Gln-288 to Ala-425 constitute a PH domain. At Ser-441 the chain carries Phosphoserine. The Arf-GAP domain occupies Glu-498–Gln-643. The C4-type zinc finger occupies Cys-513 to Cys-536. The span at Thr-590–Pro-600 shows a compositional bias: low complexity. Positions Thr-590–Arg-611 are disordered. ANK repeat units lie at residues Asn-735–Ala-764 and Lys-768–Ala-797.

As to expression, expressed in roots, but not in hypocotyls or cotyledons. Low levels detected in leaf and shoot apical meristems and in siliques.

The protein localises to the endosome. Its function is as follows. Probable GTPase-activating protein. Regulator of membrane trafficking. Required for maintaining a straight growth of root hairs. This chain is ADP-ribosylation factor GTPase-activating protein AGD1 (AGD1), found in Arabidopsis thaliana (Mouse-ear cress).